Here is a 134-residue protein sequence, read N- to C-terminus: Profilin-2 (134 aa).

Residues Cys-13 and Cys-118 are joined by a disulfide bond. The short motif at 84 to 100 (AVIRGKKGSGGITIKKT) is the Involved in PIP2 interaction element. Thr-114 is modified (phosphothreonine).

This sequence belongs to the profilin family. In terms of assembly, occurs in many kinds of cells as a complex with monomeric actin in a 1:1 ratio. Post-translationally, phosphorylated by MAP kinases.

The protein resides in the cytoplasm. The protein localises to the cytoskeleton. Its function is as follows. Binds to actin and affects the structure of the cytoskeleton. At high concentrations, profilin prevents the polymerization of actin, whereas it enhances it at low concentrations. This chain is Profilin-2, found in Olea europaea (Common olive).